The primary structure comprises 70 residues: uncharacterized protein (70 aa).

A C2H2-type zinc finger spans residues 21 to 43; sequence YECPICGEIYIKRKSMITHLRKH.

This is an uncharacterized protein from Saccharolobus islandicus (Sulfolobus islandicus).